Reading from the N-terminus, the 471-residue chain is Collagenase 3 (471 aa).

An N-terminal signal peptide occupies residues 1–19 (MQPGVLAACLLLSWTHCWS). The propeptide at 20-103 (LPLLNSNEDD…PRCGVPDVGE (84 aa)) is activation peptide. A Cysteine switch motif is present at residues 94 to 101 (PRCGVPDV). C96 serves as a coordination point for Zn(2+). N117 is a glycosylation site (N-linked (GlcNAc...) asparagine). Residue D128 participates in Ca(2+) binding. Residues N152 and N158 are each glycosylated (N-linked (GlcNAc...) asparagine). D162 is a binding site for Ca(2+). Residues H172 and D174 each contribute to the Zn(2+) site. The interaction with TIMP2 stretch occupies residues 176-246 (YPFDGPSGLL…GALMFPIYTY (71 aa)). Ca(2+) contacts are provided by D179, G180, S182, and L184. H187 contributes to the Zn(2+) binding site. N194, G196, and D198 together coordinate Ca(2+). A Zn(2+)-binding site is contributed by H200. Residues D202, D203, and E205 each contribute to the Ca(2+) site. H222 provides a ligand contact to Zn(2+). The active site involves E223. Zn(2+) contacts are provided by H226, H232, and M240. The disordered stretch occupies residues 263-284 (QSLYGPGDEDPNPKHPKTPDKC). An interaction with collagen region spans residues 268–471 (PGDEDPNPKH…VMPTNSLLWC (204 aa)). The segment covering 273–284 (PNPKHPKTPDKC) has biased composition (basic and acidic residues). 4 Hemopexin repeats span residues 281-330 (PDKC…WPEL), 331-377 (PNRI…GFPR), 379-427 (VKKI…FPGI), and 428-471 (GGKV…LLWC). The cysteines at positions 284 and 471 are disulfide-linked. D291, I293, D335, and A337 together coordinate Ca(2+). A Phosphotyrosine; by PKDCC modification is found at Y366. Ca(2+) contacts are provided by S383 and A385. N409 carries N-linked (GlcNAc...) asparagine glycosylation. D432 and V434 together coordinate Ca(2+).

This sequence belongs to the peptidase M10A family. Requires Ca(2+) as cofactor. Zn(2+) serves as cofactor. In terms of processing, the proenzyme is activated by removal of the propeptide; this cleavage can be effected by other matrix metalloproteinases, such as MMP2, MMP3 and MMP14 and may involve several cleavage steps. Cleavage can also be autocatalytic, after partial maturation by another protease or after treatment with 4-aminophenylmercuric acetate (APMA) (in vitro). N-glycosylated. Post-translationally, tyrosine phosphorylated by PKDCC/VLK.

It is found in the secreted. Its subcellular location is the extracellular space. The protein localises to the extracellular matrix. Its function is as follows. Plays a role in the degradation of extracellular matrix proteins including fibrillar collagen, fibronectin, TNC and ACAN. Cleaves triple helical collagens, including type I, type II and type III collagen, but has the highest activity with soluble type II collagen. Can also degrade collagen type IV, type XIV and type X. May also function by activating or degrading key regulatory proteins, such as TGFB1 and CCN2. Plays a role in wound healing, tissue remodeling, cartilage degradation, bone development, bone mineralization and ossification. Required for normal embryonic bone development and ossification. Plays a role in the healing of bone fractures via endochondral ossification. Plays a role in wound healing, probably by a mechanism that involves proteolytic activation of TGFB1 and degradation of CCN2. Plays a role in keratinocyte migration during wound healing. May play a role in cell migration and in tumor cell invasion. The sequence is that of Collagenase 3 (MMP13) from Oryctolagus cuniculus (Rabbit).